The primary structure comprises 25 residues: M-lycotoxin-Hc1a (25 aa).

At L25 the chain carries Leucine amide.

Belongs to the cationic peptide 04 (cupiennin) family. 05 subfamily. In terms of tissue distribution, expressed by the venom gland.

It is found in the secreted. The protein localises to the target cell membrane. Functionally, forms pore that permeabilize the cell membrane. Promotes efflux of calcium from synaptosomes, causes hemolysis, and dissipates voltage gradients across muscle membrane. Potently inhibits the growth of bacteria, yeast and Leishmania. Is lethal to lepidopteran larvae. May function both in the prey capture strategy as well as protection from infectious organisms arising from prey ingestion. This is M-lycotoxin-Hc1a from Hogna carolinensis (Carolina wolf spider).